Consider the following 340-residue polypeptide: Photosystem II protein D1 (340 aa).

Helical transmembrane passes span 25–42 (YIGW…LATV), 114–129 (HFFL…EWEF), and 138–152 (WIFV…AAAA). His-114 is a binding site for chlorophyll a. Residue Trp-122 coordinates pheophytin a. Asp-166 and Glu-185 together coordinate [CaMn4O5] cluster. Residues 193-214 (FHILGVAGVFGGSLFSAMHGSL) form a helical membrane-spanning segment. His-194 contacts chlorophyll a. A quinone-binding positions include His-211 and 260 to 261 (SF). A Fe cation-binding site is contributed by His-211. His-268 lines the Fe cation pocket. A helical transmembrane segment spans residues 270–284 (FLAAWPVIGIWFTSL). Positions 328, 329, 338, and 340 each coordinate [CaMn4O5] cluster.

This sequence belongs to the reaction center PufL/M/PsbA/D family. In terms of assembly, PSII is composed of 1 copy each of membrane proteins PsbA, PsbB, PsbC, PsbD, PsbE, PsbF, PsbH, PsbI, PsbJ, PsbK, PsbL, PsbM, PsbT, PsbX, PsbY, PsbZ, Psb30/Ycf12, at least 3 peripheral proteins of the oxygen-evolving complex and a large number of cofactors. It forms dimeric complexes. The cofactor is The D1/D2 heterodimer binds P680, chlorophylls that are the primary electron donor of PSII, and subsequent electron acceptors. It shares a non-heme iron and each subunit binds pheophytin, quinone, additional chlorophylls, carotenoids and lipids. D1 provides most of the ligands for the Mn4-Ca-O5 cluster of the oxygen-evolving complex (OEC). There is also a Cl(-1) ion associated with D1 and D2, which is required for oxygen evolution. The PSII complex binds additional chlorophylls, carotenoids and specific lipids.. In terms of processing, tyr-157 forms a radical intermediate that is referred to as redox-active TyrZ, YZ or Y-Z.

It is found in the plastid. The protein localises to the chloroplast thylakoid membrane. It catalyses the reaction 2 a plastoquinone + 4 hnu + 2 H2O = 2 a plastoquinol + O2. Functionally, photosystem II (PSII) is a light-driven water:plastoquinone oxidoreductase that uses light energy to abstract electrons from H(2)O, generating O(2) and a proton gradient subsequently used for ATP formation. It consists of a core antenna complex that captures photons, and an electron transfer chain that converts photonic excitation into a charge separation. The D1/D2 (PsbA/PsbD) reaction center heterodimer binds P680, the primary electron donor of PSII as well as several subsequent electron acceptors. This is Photosystem II protein D1 from Amphidinium operculatum (Dinoflagellate).